We begin with the raw amino-acid sequence, 347 residues long: MSALGAVIALLLWGQLFAVDSGNDVTDIADDGCPKPPEIANGYVEHLVRYQCKKYYRLRTEGDGVYTLNNEKQWTNKAVGDKLPECEAVCGKPKNPANPVQRILGGHLDAKGSFPWQAKMVSRHNLTTGATLINEQWLLTTAKNLFLNHSENATAKDIAPTLTLYVGKNQLVEIEKVVLYPNYSQVDIGLIKLKDKVPVNERVMPICLPSKDYAEVGRVGYVSGWGRNANFKFTDHLKYVMLPVADQYQCVKHYEGSTVPEKKTPKSPVGQQPILNEHTFCAGMSKYQEDTCYGDAGSAFAVHDLEEDTWYAAGILSFDKSCGVAEYGVYVKATSIQDWVQKTIAEN.

The N-terminal stretch at 1-18 (MSALGAVIALLLWGQLFA) is a signal peptide. The Sushi domain maps to 31-88 (DGCPKPPEIANGYVEHLVRYQCKKYYRLRTEGDGVYTLNNEKQWTNKAVGDKLPECEA). 4 disulfides stabilise this stretch: cysteine 52-cysteine 86, cysteine 90-cysteine 207, cysteine 250-cysteine 281, and cysteine 292-cysteine 322. The region spanning 103–345 (ILGGHLDAKG…IQDWVQKTIA (243 aa)) is the Peptidase S1 domain. Residues asparagine 125, asparagine 148, asparagine 152, and asparagine 182 are each glycosylated (N-linked (GlcNAc...) asparagine). The interaction with CD163 stretch occupies residues 259–264 (VPEKKT).

This sequence belongs to the peptidase S1 family. As to quaternary structure, tetramer of two alpha and two beta chains; disulfide-linked. The hemoglobin/haptoglobin complex is composed of a haptoglobin dimer bound to two hemoglobin alpha-beta dimers. Interacts with CD163. Interacts with ERGIC3. In terms of tissue distribution, expressed by the liver and secreted in plasma.

The protein resides in the secreted. Its function is as follows. As a result of hemolysis, hemoglobin is found to accumulate in the kidney and is secreted in the urine. Haptoglobin captures, and combines with free plasma hemoglobin to allow hepatic recycling of heme iron and to prevent kidney damage. Haptoglobin also acts as an antioxidant, has antibacterial activity and plays a role in modulating many aspects of the acute phase response. Hemoglobin/haptoglobin complexes are rapidly cleared by the macrophage CD163 scavenger receptor expressed on the surface of liver Kupfer cells through an endocytic lysosomal degradation pathway. This Ateles geoffroyi (Black-handed spider monkey) protein is Haptoglobin (HP).